Here is a 910-residue protein sequence, read N- to C-terminus: Seizure 6-like protein 2 (910 aa).

The signal sequence occupies residues 1–27 (MGTPKAQHPPPSQLLLLILLSCAWIEG). Over 28-844 (LPLKEDEMMP…DPSRQLEGGN (817 aa)) the chain is Extracellular. Residues 70-152 (PGSDPDPTLA…PLRPEGGEEE (83 aa)) form a disordered region. The segment covering 123–145 (LTPPPGTTAPPPPGPASPVPPLR) has biased composition (pro residues). Cys-173 and Cys-202 are disulfide-bonded. In terms of domain architecture, CUB 1 spans 173–286 (CNNNISEGEG…NGFRIHYQAY (114 aa)). N-linked (GlcNAc...) asparagine glycosylation occurs at Asn-222. The region spanning 288–347 (LSCGFPPRPAHGDVSVTDLHPGGTATFHCDSGYQLQGEETLICLNGTRPAWTGEPPSCTA) is the Sushi 1 domain. 12 disulfides stabilise this stretch: Cys-290–Cys-330, Cys-316–Cys-345, Cys-349–Cys-376, Cys-464–Cys-508, Cys-491–Cys-523, Cys-527–Cys-553, Cys-644–Cys-686, Cys-672–Cys-699, Cys-705–Cys-747, Cys-733–Cys-764, Cys-771–Cys-813, and Cys-799–Cys-828. Asn-332, Asn-373, Asn-473, and Asn-517 each carry an N-linked (GlcNAc...) asparagine glycan. The region spanning 349-459 (CGGTIHNATL…LLLSLRFEAF (111 aa)) is the CUB 2 domain. The Sushi 2 domain maps to 462-525 (DRCFPPFLAH…WNDTEPACKA (64 aa)). Residues 527–638 (CGGELSEPAG…QGFVLHFKEV (112 aa)) form the CUB 3 domain. 3 Sushi domains span residues 642–701 (DTCP…ACQK), 703–766 (MTCA…KCAL), and 769–830 (EPCL…LCKV). A helical transmembrane segment spans residues 845-865 (LALAILLPLGLVIVLGIGVYI). The Cytoplasmic segment spans residues 866–910 (YYTKLQGKSLFGFSGSHSYSPITVESDFSNPLYEAGDTREYEVSI).

Belongs to the SEZ6 family. In terms of tissue distribution, expressed exclusively in the brain, predominantly in the neurons. Wide expression in the gray matter of the brain with high levels in the olfactory bulb, anterior olfactory nuclei, hippocampal formation and cerebellar cortex. Detected diffusely and weakly in the white matter, such as the corpus callosum and cerebellar medulla. In the cerebellar cortex, intensely expressed in Purkinje cells (PC) and granule cells. Detected also in interneurons in the molecular layer. Up-regulated at two weeks after birth.

The protein localises to the cell membrane. The protein resides in the endoplasmic reticulum membrane. May contribute to specialized endoplasmic reticulum functions in neurons. The polypeptide is Seizure 6-like protein 2 (Sez6l2) (Mus musculus (Mouse)).